The following is a 512-amino-acid chain: Cytochrome P450 monooxygenase 208 (512 aa).

Residues 4–24 (LFLVLDTGAAVLLVALLFVVY) traverse the membrane as a helical segment. Cysteine 438 is a binding site for heme.

It belongs to the cytochrome P450 family. It depends on heme as a cofactor.

Its subcellular location is the membrane. It functions in the pathway secondary metabolite biosynthesis. Functionally, cytochrome P450 monooxygenase that is able to use 7-ethoxycoumarin as a substrate for oxidation. The polypeptide is Cytochrome P450 monooxygenase 208 (Postia placenta (strain ATCC 44394 / Madison 698-R) (Brown rot fungus)).